The primary structure comprises 430 residues: Shufflon protein A' (430 aa).

The tract at residues 1–361 (MKKYDRGWAS…TGAILSCQSG (361 aa)) is constant region. Positions 362-430 (TWGTIGGKLK…GCIASCVTLN (69 aa)) are variable region.

The chain is Shufflon protein A' from Escherichia coli.